A 246-amino-acid chain; its full sequence is Protein phosphatase PhpP (246 aa).

The PPM-type phosphatase domain occupies 2–240 (EISLLTDVGQ…DNITVALVSM (239 aa)). Mn(2+) is bound by residues aspartate 36, glycine 37, aspartate 192, and aspartate 231.

The protein belongs to the PP2C family. Mn(2+) serves as cofactor.

It is found in the cytoplasm. The catalysed reaction is O-phospho-L-seryl-[protein] + H2O = L-seryl-[protein] + phosphate. It catalyses the reaction O-phospho-L-threonyl-[protein] + H2O = L-threonyl-[protein] + phosphate. In terms of biological role, protein phosphatase able to dephosphorylate StkP-P and other phosphorylated protein substrates. PhpP and its cognate protein kinase StkP appear to constitute a functional signaling couple in vivo, PhpP's primary role being probably to control phosphorylation levels of StkP and of its targets. PhpP thus performs an essential control of StkP activity. Also dephosphorylates DivIVA in vivo. This is Protein phosphatase PhpP (phpP) from Streptococcus pneumoniae serotype 2 (strain D39 / NCTC 7466).